We begin with the raw amino-acid sequence, 523 residues long: Apoptosis inhibitor 5-B (523 aa).

The tract at residues 1 to 360 (MPTVEELYRN…HQLGRKLPDF (360 aa)) is ARM-like and Heat-like helical repeats. The disordered stretch occupies residues 446 to 523 (VQKTDSGQKR…RGNRSRGRIY (78 aa)). The Nuclear localization signal motif lies at 454 to 475 (KRMSDETSSTSPPKKPVVGPKR). The segment covering 502–515 (GFQGGRGRGWGGRG) has biased composition (gly residues).

It belongs to the API5 family. In terms of assembly, monomer.

It is found in the nucleus. Its function is as follows. May be an antiapoptotic factor. The polypeptide is Apoptosis inhibitor 5-B (api5-b) (Xenopus laevis (African clawed frog)).